A 385-amino-acid chain; its full sequence is Methylthioribose-1-phosphate isomerase (385 aa).

Catalysis depends on D255, which acts as the Proton donor.

It belongs to the eIF-2B alpha/beta/delta subunits family. MtnA subfamily.

The protein localises to the cytoplasm. It localises to the nucleus. The catalysed reaction is 5-(methylsulfanyl)-alpha-D-ribose 1-phosphate = 5-(methylsulfanyl)-D-ribulose 1-phosphate. The protein operates within amino-acid biosynthesis; L-methionine biosynthesis via salvage pathway; L-methionine from S-methyl-5-thio-alpha-D-ribose 1-phosphate: step 1/6. Catalyzes the interconversion of methylthioribose-1-phosphate (MTR-1-P) into methylthioribulose-1-phosphate (MTRu-1-P). The sequence is that of Methylthioribose-1-phosphate isomerase (mri1) from Aspergillus clavatus (strain ATCC 1007 / CBS 513.65 / DSM 816 / NCTC 3887 / NRRL 1 / QM 1276 / 107).